The primary structure comprises 594 residues: Estrogen receptor (594 aa).

Residues 1–184 (MTMTLHTKAS…AMESAKETRY (184 aa)) form a modulating (transactivation AF-1); mediates interaction with MACROD1 region. Serine 10 carries O-linked (GlcNAc) serine glycosylation. Positions 35-47 (LERPLGEVYVESS) are required for interaction with NCOA1. The tract at residues 35-174 (LERPLGEVYV…LASSGDKGSM (140 aa)) is interaction with DDX5; self-association. Residues serine 104 and serine 106 each carry the phosphoserine; by CDK2 modification. Serine 118 is modified (phosphoserine). The disordered stretch occupies residues 152–173 (PNADNRRQGGRERLASSGDKGS). A compositionally biased stretch (basic and acidic residues) spans 154–165 (ADNRRQGGRERL). Serine 167 is subject to Phosphoserine; by CK2. NR C4-type zinc fingers lie at residues 185 to 205 (CAVC…CEGC) and 221 to 245 (CPAT…LRKC). The nuclear receptor DNA-binding region spans 185–250 (CAVCNDYASG…RLRKCYEVGM (66 aa)). Residues 185–310 (CAVCNDYASG…TKKISPVLSL (126 aa)) are mediates interaction with DNTTIP2. The segment at 251–310 (MKGGIRKDRRGGRMLKHKRQRDDGEGRNEAGPSGDRRPANFWPSPLLIKHTKKISPVLSL) is hinge. Residues 257–269 (KDRRGGRMLKHKR) are compositionally biased toward basic residues. Residues 257-293 (KDRRGGRMLKHKRQRDDGEGRNEAGPSGDRRPANFWP) form a disordered region. An Asymmetric dimethylarginine; by PRMT1 modification is found at arginine 260. Residues 262–594 (GRMLKHKRQR…GEAEGFPNTI (333 aa)) form an interaction with AKAP13 region. Residues 264 to 594 (MLKHKRQRDD…GEAEGFPNTI (331 aa)) form a self-association region. Residues 270–288 (QRDDGEGRNEAGPSGDRRP) are compositionally biased toward basic and acidic residues. Positions 311 to 546 (TAEQMISALL…DLLLEMLDAH (236 aa)) constitute an NR LBD domain. Positions 311 to 594 (TAEQMISALL…GEAEGFPNTI (284 aa)) are transactivation AF-2. 17beta-estradiol-binding residues include glutamate 353 and arginine 394. A lipid anchor (S-palmitoyl cysteine) is attached at cysteine 447. Histidine 523 is a 17beta-estradiol binding site. Tyrosine 536 bears the Phosphotyrosine; by Tyr-kinases mark. Residues 551–575 (PANHGGAPMEETNQSQLATTGSTSP) form a disordered region. The segment covering 561–575 (ETNQSQLATTGSTSP) has biased composition (polar residues). Threonine 570 carries an O-linked (GlcNAc) threonine glycan.

Belongs to the nuclear hormone receptor family. NR3 subfamily. Binds DNA as a homodimer. Can form a heterodimer with ESR2. Interacts with coactivator NCOA5. Interacts with PELP1, the interaction is enhanced by 17-beta-estradiol; the interaction increases ESR1 transcriptional activity. Interacts with NCOA7; the interaction is ligand-inducible. Interacts with AKAP13, CUEDC2, HEXIM1, KDM5A, MAP1S, SMARD1, and UBE1C. Interacts with MUC1; the interaction is stimulated by 7 beta-estradiol (E2) and enhances ESR1-mediated transcription. Interacts with DNTTIP2, and UIMC1. Interacts with KMT2D/MLL2. Interacts with ATAD2; the interaction is enhanced by estradiol. Interacts with KIF18A and LDB1. Interacts with RLIM (via its C-terminus). Interacts with MACROD1. Interacts with SH2D4A and PLCG. Interacts with SH2D4A; the interaction blocks binding to PLCG and inhibits estrogen-induced cell proliferation. Interacts with DYNLL1. Interacts with CCDC62; the interaction requires estradiol and appears to enhance the transcription of target genes. Interacts with NR2C1; the interaction prevents homodimerization of ESR1 and suppresses its transcriptional activity and cell growth. Interacts with DNAAF4. Interacts with PRMT2. Interacts with RBFOX2. Interacts with EP300; the interaction is estrogen-dependent and enhanced by CITED1. Interacts with CITED1; the interaction is estrogen-dependent. Interacts with FAM120B, FOXL2, PHB2 and SLC30A9. Interacts with coactivators NCOA3 and NCOA6. Interacts with STK3/MST2 only in the presence of SAV1 and vice-versa. Binds to CSNK1D. Interacts with NCOA2; NCOA2 can interact with ESR1 AF-1 and AF-2 domains simultaneously and mediate their transcriptional synergy. Interacts with DDX5. Interacts with NCOA1; the interaction seems to require a self-association of N-terminal and C-terminal regions. Interacts with ZNF366, DDX17, NFKB1, RELA, SP1 and SP3. Interacts with NRIP1. Interacts with GPER1; the interaction occurs in an estrogen-dependent manner. Interacts with CLOCK and the interaction is stimulated by estrogen. Interacts with TRIP4 (ufmylated); estrogen dependent. Interacts with LMTK3; the interaction phosphorylates ESR1 (in vitro) and protects it against proteasomal degradation. Interacts with CCAR2 (via N-terminus) in a ligand-independent manner. Interacts with ZFHX3. Interacts with SFR1 in a ligand-dependent and -independent manner. Interacts with DCAF13, LATS1 and DCAF1; regulates ESR1 ubiquitination and ubiquitin-mediated proteasomal degradation. Interacts (via DNA-binding domain) with POU4F2 (C-terminus); this interaction increases the estrogen receptor ESR1 transcriptional activity in a DNA- and ligand 17-beta-estradiol-independent manner. Interacts with ESRRB isoform 1. Interacts with UBE3A and WBP2. Interacts with GTF2B. Interacts with RBM39. In the absence of hormonal ligand, interacts with TACC1. Interacts with PI3KR1 or PI3KR2 and PTK2/FAK1. Interacts with SRC. Interacts with BAG1; the interaction is promoted in the absence of estradiol (17-beta-estradiol/E2). Interacts with and ubiquitinated by STUB1; the interaction is promoted in the absence of estradiol (17-beta-estradiol/E2). Interacts with NEDD8. Ubiquitinated; regulated by LATS1 via DCAF1 it leads to ESR1 proteasomal degradation. Deubiquitinated by OTUB1. Ubiquitinated by STUB1/CHIP; in the CA1 hippocampal region following loss of endogenous circulating estradiol (17-beta-estradiol/E2). Ubiquitinated by UBR5, leading to its degradation: UBR5 specifically recognizes and binds ligand-bound ESR1 when it is not associated with coactivators (NCOAs). In presence of NCOAs, the UBR5-degron is not accessible, preventing its ubiquitination and degradation. Post-translationally, phosphorylated by cyclin A/CDK2 and CK1. Phosphorylation probably enhances transcriptional activity. Dephosphorylation at Ser-118 by PPP5C inhibits its transactivation activity. Phosphorylated by LMTK3 (in vitro). In terms of processing, palmitoylated at Cys-447 by ZDHHC7 and ZDHHC21. Palmitoylation is required for plasma membrane targeting and for rapid intracellular signaling via ERK and AKT kinases and cAMP generation, but not for signaling mediated by the nuclear hormone receptor. Dimethylated by PRMT1 at Arg-260. The methylation may favor cytoplasmic localization. Demethylated by JMJD6 at Arg-260.

The protein resides in the nucleus. It is found in the cytoplasm. The protein localises to the golgi apparatus. It localises to the cell membrane. Nuclear hormone receptor. The steroid hormones and their receptors are involved in the regulation of eukaryotic gene expression and affect cellular proliferation and differentiation in target tissues. Ligand-dependent nuclear transactivation involves either direct homodimer binding to a palindromic estrogen response element (ERE) sequence or association with other DNA-binding transcription factors, such as AP-1/c-Jun, c-Fos, ATF-2, Sp1 and Sp3, to mediate ERE-independent signaling. Ligand binding induces a conformational change allowing subsequent or combinatorial association with multiprotein coactivator complexes through LXXLL motifs of their respective components. Mutual transrepression occurs between the estrogen receptor (ER) and NF-kappa-B in a cell-type specific manner. Decreases NF-kappa-B DNA-binding activity and inhibits NF-kappa-B-mediated transcription from the IL6 promoter and displace RELA/p65 and associated coregulators from the promoter. Recruited to the NF-kappa-B response element of the CCL2 and IL8 promoters and can displace CREBBP. Present with NF-kappa-B components RELA/p65 and NFKB1/p50 on ERE sequences. Can also act synergistically with NF-kappa-B to activate transcription involving respective recruitment adjacent response elements; the function involves CREBBP. Can activate the transcriptional activity of TFF1. Also mediates membrane-initiated estrogen signaling involving various kinase cascades. Essential for MTA1-mediated transcriptional regulation of BRCA1 and BCAS3. Maintains neuronal survival in response to ischemic reperfusion injury when in the presence of circulating estradiol (17-beta-estradiol/E2). In Equus caballus (Horse), this protein is Estrogen receptor (ESR1).